Consider the following 408-residue polypeptide: LL-diaminopimelate aminotransferase (408 aa).

Substrate-binding residues include Y15 and G42. Pyridoxal 5'-phosphate is bound by residues Y72, 108–109 (SK), Y132, N187, Y218, and 246–248 (SFS). Substrate is bound by residues K109, Y132, and N187. K249 is subject to N6-(pyridoxal phosphate)lysine. Residues R257 and N292 each contribute to the pyridoxal 5'-phosphate site. 2 residues coordinate substrate: N292 and R388.

This sequence belongs to the class-I pyridoxal-phosphate-dependent aminotransferase family. LL-diaminopimelate aminotransferase subfamily. In terms of assembly, homodimer. Pyridoxal 5'-phosphate serves as cofactor.

The enzyme catalyses (2S,6S)-2,6-diaminopimelate + 2-oxoglutarate = (S)-2,3,4,5-tetrahydrodipicolinate + L-glutamate + H2O + H(+). It participates in amino-acid biosynthesis; L-lysine biosynthesis via DAP pathway; LL-2,6-diaminopimelate from (S)-tetrahydrodipicolinate (aminotransferase route): step 1/1. Its function is as follows. Involved in the synthesis of meso-diaminopimelate (m-DAP or DL-DAP), required for both lysine and peptidoglycan biosynthesis. Catalyzes the direct conversion of tetrahydrodipicolinate to LL-diaminopimelate. The sequence is that of LL-diaminopimelate aminotransferase from Prochlorococcus marinus (strain MIT 9312).